Here is a 277-residue protein sequence, read N- to C-terminus: 2-dehydro-3-deoxyphosphooctonate aldolase (277 aa).

This sequence belongs to the KdsA family.

Its subcellular location is the cytoplasm. The enzyme catalyses D-arabinose 5-phosphate + phosphoenolpyruvate + H2O = 3-deoxy-alpha-D-manno-2-octulosonate-8-phosphate + phosphate. It participates in carbohydrate biosynthesis; 3-deoxy-D-manno-octulosonate biosynthesis; 3-deoxy-D-manno-octulosonate from D-ribulose 5-phosphate: step 2/3. The protein operates within bacterial outer membrane biogenesis; lipopolysaccharide biosynthesis. The chain is 2-dehydro-3-deoxyphosphooctonate aldolase from Dichelobacter nodosus (strain VCS1703A).